The primary structure comprises 252 residues: Pantothenate synthetase (252 aa).

Residue 29–36 (MGNLHAGH) participates in ATP binding. The active-site Proton donor is the His36. Residue Gln60 coordinates (R)-pantoate. Gln60 is a beta-alanine binding site. 146–149 (GEKD) is an ATP binding site. Gln152 is a (R)-pantoate binding site. Residues Val175 and 183 to 186 (CSSR) contribute to the ATP site.

Belongs to the pantothenate synthetase family. Homodimer.

The protein resides in the cytoplasm. It catalyses the reaction (R)-pantoate + beta-alanine + ATP = (R)-pantothenate + AMP + diphosphate + H(+). It functions in the pathway cofactor biosynthesis; (R)-pantothenate biosynthesis; (R)-pantothenate from (R)-pantoate and beta-alanine: step 1/1. Functionally, catalyzes the condensation of pantoate with beta-alanine in an ATP-dependent reaction via a pantoyl-adenylate intermediate. This chain is Pantothenate synthetase, found in Legionella pneumophila (strain Lens).